The following is a 27-amino-acid chain: Conotoxin as14a (27 aa).

Disulfide bonds link cysteine 6-cysteine 26 and cysteine 10-cysteine 22.

It belongs to the conotoxin L superfamily. As to expression, expressed by the venom duct.

Its subcellular location is the secreted. Functionally, in vivo, intracranial injection, elicits scratching and grooming activity in mice. This chain is Conotoxin as14a, found in Conus cancellatus (Cancellate cone).